Consider the following 22-residue polypeptide: Caerin-3.4 (22 aa).

Position 22 is a lysine amide (lysine 22).

Expressed by the skin parotoid and/or rostral glands.

Its subcellular location is the secreted. Its function is as follows. Antibacterial peptide, that adopts an alpha helical conformation which can disrupt bacterial membranes. Each caerin displays a different antimicrobial specificity. This chain is Caerin-3.4, found in Ranoidea caerulea (Green tree frog).